Consider the following 138-residue polypeptide: Large ribosomal subunit protein uL16 (138 aa).

Residues methionine 1 to glutamine 13 show a composition bias toward basic residues. Residues methionine 1 to glycine 24 are disordered.

This sequence belongs to the universal ribosomal protein uL16 family. Part of the 50S ribosomal subunit.

Its function is as follows. Binds 23S rRNA and is also seen to make contacts with the A and possibly P site tRNAs. The polypeptide is Large ribosomal subunit protein uL16 (Bordetella bronchiseptica (strain ATCC BAA-588 / NCTC 13252 / RB50) (Alcaligenes bronchisepticus)).